The primary structure comprises 212 residues: DNA-directed RNA polymerase III subunit RPC8 (212 aa).

Phosphoserine is present on serine 162. Residues 166-184 (RELEERAQLENEIEGKNEE) show a composition bias toward basic and acidic residues. The interval 166-194 (RELEERAQLENEIEGKNEETPQNEKPPAY) is disordered.

This sequence belongs to the eukaryotic RPB7/RPC8 RNA polymerase subunit family. As to quaternary structure, component of the RNA polymerase III (Pol III) complex consisting of 17 subunits. RPC25/RPC8 and RPC17/RPC9 form a Pol III subcomplex.

It localises to the nucleus. In terms of biological role, DNA-dependent RNA polymerase catalyzes the transcription of DNA into RNA using the four ribonucleoside triphosphates as substrates. Specific peripheric component of RNA polymerase III which synthesizes small RNAs, such as 5S rRNA and tRNA. The RPC25/RPC8-RPC17/RPC9 subcomplex may bind Pol III transcripts emerging from the adjacent exit pore during elongation. This chain is DNA-directed RNA polymerase III subunit RPC8 (RPC25), found in Saccharomyces cerevisiae (strain ATCC 204508 / S288c) (Baker's yeast).